Consider the following 462-residue polypeptide: uncharacterized protein (462 aa).

WD repeat units follow at residues 170-209 (GGER…EVQL), 212-260 (GHTD…PLLR), 263-302 (GHLA…ELLM), 305-344 (GHSE…SIMV), 347-386 (EHIR…LAHT), 389-430 (AHSS…LIKS), and 433-462 (GHEE…LWYP).

The protein resides in the cytoplasm. This is an uncharacterized protein from Schizosaccharomyces pombe (strain 972 / ATCC 24843) (Fission yeast).